The sequence spans 208 residues: Cysteine-rich protein 2 (208 aa).

In terms of domain architecture, LIM zinc-binding 1 spans 5-57 (CPKCDKTVCFAEKVSSLGKDWHKFCLKCERCSKTLTPGGHAEHDGKPFCHKPC). Lysine 23 bears the N6-acetyllysine mark. The segment at 98-119 (AEERKASGPPKGPSRASSVTTF) is disordered. Residue serine 104 is modified to Phosphoserine. One can recognise an LIM zinc-binding 2 domain in the interval 126–178 (CPRCSKKVYFAEKVTSLGKDWHRPCLHCERCGKTLTPGGHAEHDGQPYCHKPC). Lysine 138 and lysine 144 each carry N6-acetyllysine.

As to quaternary structure, interacts with TGFB1I1.

This Pongo abelii (Sumatran orangutan) protein is Cysteine-rich protein 2 (CRIP2).